Here is a 504-residue protein sequence, read N- to C-terminus: Catalase (504 aa).

Catalysis depends on residues histidine 56 and asparagine 129. Tyrosine 339 contacts heme.

This sequence belongs to the catalase family. As to quaternary structure, homodimer. Requires heme as cofactor.

The catalysed reaction is 2 H2O2 = O2 + 2 H2O. Decomposes hydrogen peroxide into water and oxygen; serves to protect cells from the toxic effects of hydrogen peroxide. The polypeptide is Catalase (katA) (Staphylococcus epidermidis).